The following is a 179-amino-acid chain: NADH dehydrogenase [ubiquinone] 1 beta subcomplex subunit 9 (179 aa).

An N-acetylalanine modification is found at alanine 2. Phosphoserine is present on serine 85. The disordered stretch occupies residues 136–162 (EVKQLQEETPPGGPLTEALPPARKEGD).

This sequence belongs to the complex I LYR family. In terms of assembly, mammalian complex I is composed of 45 different subunits.

It localises to the mitochondrion inner membrane. Accessory subunit of the mitochondrial membrane respiratory chain NADH dehydrogenase (Complex I), that is believed to be not involved in catalysis. Complex I functions in the transfer of electrons from NADH to the respiratory chain. The immediate electron acceptor for the enzyme is believed to be ubiquinone. This Pan troglodytes (Chimpanzee) protein is NADH dehydrogenase [ubiquinone] 1 beta subcomplex subunit 9 (NDUFB9).